A 257-amino-acid chain; its full sequence is Imidazole glycerol phosphate synthase subunit HisF (257 aa).

Catalysis depends on residues aspartate 11 and aspartate 130.

This sequence belongs to the HisA/HisF family. Heterodimer of HisH and HisF.

It is found in the cytoplasm. It carries out the reaction 5-[(5-phospho-1-deoxy-D-ribulos-1-ylimino)methylamino]-1-(5-phospho-beta-D-ribosyl)imidazole-4-carboxamide + L-glutamine = D-erythro-1-(imidazol-4-yl)glycerol 3-phosphate + 5-amino-1-(5-phospho-beta-D-ribosyl)imidazole-4-carboxamide + L-glutamate + H(+). Its pathway is amino-acid biosynthesis; L-histidine biosynthesis; L-histidine from 5-phospho-alpha-D-ribose 1-diphosphate: step 5/9. Its function is as follows. IGPS catalyzes the conversion of PRFAR and glutamine to IGP, AICAR and glutamate. The HisF subunit catalyzes the cyclization activity that produces IGP and AICAR from PRFAR using the ammonia provided by the HisH subunit. The chain is Imidazole glycerol phosphate synthase subunit HisF from Shewanella halifaxensis (strain HAW-EB4).